We begin with the raw amino-acid sequence, 472 residues long: Chromosomal replication initiator protein DnaA (472 aa).

The tract at residues 1-73 (MSNMEHDRWS…LTCWQAEMPE (73 aa)) is domain I, interacts with DnaA modulators. The interval 73 to 128 (EVCRIDLTVRSPMRAAVTKEAPAPAEHRRDEHRPAADARSHAAAPAPSNHDALGGS) is domain II. Positions 89–127 (VTKEAPAPAEHRRDEHRPAADARSHAAAPAPSNHDALGG) are disordered. Over residues 97–112 (AEHRRDEHRPAADARS) the composition is skewed to basic and acidic residues. The segment covering 113 to 124 (HAAAPAPSNHDA) has biased composition (low complexity). Residues 129-351 (PLDPRLTFAS…GAINRLLAHS (223 aa)) form a domain III, AAA+ region region. Residues glycine 176, glycine 178, lysine 179, and threonine 180 each contribute to the ATP site. The domain IV, binds dsDNA stretch occupies residues 352-472 (KLNAQPVTLE…VESLKRQLQE (121 aa)).

Belongs to the DnaA family. As to quaternary structure, oligomerizes as a right-handed, spiral filament on DNA at oriC.

Its subcellular location is the cytoplasm. Plays an essential role in the initiation and regulation of chromosomal replication. ATP-DnaA binds to the origin of replication (oriC) to initiate formation of the DNA replication initiation complex once per cell cycle. Binds the DnaA box (a 9 base pair repeat at the origin) and separates the double-stranded (ds)DNA. Forms a right-handed helical filament on oriC DNA; dsDNA binds to the exterior of the filament while single-stranded (ss)DNA is stabiized in the filament's interior. The ATP-DnaA-oriC complex binds and stabilizes one strand of the AT-rich DNA unwinding element (DUE), permitting loading of DNA polymerase. After initiation quickly degrades to an ADP-DnaA complex that is not apt for DNA replication. Binds acidic phospholipids. The chain is Chromosomal replication initiator protein DnaA from Rhodopseudomonas palustris (strain BisB5).